The sequence spans 89 residues: Putative membrane protein insertion efficiency factor (89 aa).

Residues 68-89 are disordered; that stretch reads VPPPNSDARNAPHEAEASSHRL. Positions 77–89 are enriched in basic and acidic residues; sequence NAPHEAEASSHRL.

This sequence belongs to the UPF0161 family.

Its subcellular location is the cell inner membrane. Functionally, could be involved in insertion of integral membrane proteins into the membrane. The polypeptide is Putative membrane protein insertion efficiency factor (Burkholderia thailandensis (strain ATCC 700388 / DSM 13276 / CCUG 48851 / CIP 106301 / E264)).